A 642-amino-acid polypeptide reads, in one-letter code: RNA polymerase sigma factor RpoD (642 aa).

Residues 199-228 (HLETTAPEKPSNDNSDENEDDEESEEDADE) form a disordered region. Residues 212-228 (NSDENEDDEESEEDADE) show a composition bias toward acidic residues. Residues 403–473 (MIQANLRLVI…TRSIADQART (71 aa)) are sigma-70 factor domain-2. Residues 427–430 (DLIQ) carry the Interaction with polymerase core subunit RpoC motif. Residues 482-558 (ETINKMNRIS…DANNVAPADA (77 aa)) are sigma-70 factor domain-3. The interval 571–624 (ILESLTPREAKVLRMRFGIDMNTDHTLEEVGRQFDVTRERIRQIEAKALRKLRH) is sigma-70 factor domain-4. A DNA-binding region (H-T-H motif) is located at residues 597–616 (LEEVGRQFDVTRERIRQIEA).

It belongs to the sigma-70 factor family. RpoD/SigA subfamily. As to quaternary structure, interacts transiently with the RNA polymerase catalytic core.

It localises to the cytoplasm. Functionally, sigma factors are initiation factors that promote the attachment of RNA polymerase to specific initiation sites and are then released. This sigma factor is the primary sigma factor during exponential growth. This is RNA polymerase sigma factor RpoD from Neisseria gonorrhoeae.